A 252-amino-acid polypeptide reads, in one-letter code: Proteasome subunit alpha 1 (252 aa).

M1 is subject to N-acetylmethionine; alternate.

The protein belongs to the peptidase T1A family. The 20S proteasome core is composed of 14 alpha and 14 beta subunits that assemble into four stacked heptameric rings, resulting in a barrel-shaped structure. The two inner rings, each composed of seven catalytic beta subunits, are sandwiched by two outer rings, each composed of seven alpha subunits. H.volcanii produces at least 2 types of 20S proteasomes: an alpha1-beta proteasome and a proteasome containing all three subunits (alpha1, alpha2, and beta) that appears to be asymmetrical with homo-oligomeric alpha1 and alpha2 rings positioned on separate ends. The catalytic chamber with the active sites is on the inside of the barrel. Has probably a gated structure, the ends of the cylinder being occluded by the N-termini of the alpha-subunits. Is likely capped at one or both ends by the proteasome regulatory ATPase, PAN. Post-translationally, acetylated. The acetylated form at Met-1 was shown to be in 100-fold excess of the unacetylated form with the initiator methionine removed in whole cells and purified 20S proteasomes.

Its subcellular location is the cytoplasm. Its activity is regulated as follows. The formation of the proteasomal ATPase PAN-20S proteasome complex, via the docking of the C-termini of PAN into the intersubunit pockets in the alpha-rings, triggers opening of the gate for substrate entry. Interconversion between the open-gate and close-gate conformations leads to a dynamic regulation of the 20S proteasome proteolysis activity. In vitro, the chymotrypsin-like activity of the alpha1-beta proteasome is potently inhibited by carbobenzoxyl-leucinyl-leucinyl-leucinal-H (MG132) and significantly by N-acetyl-leucinyl-leucinyl-norleucinal-H (calpain inhibitor I). Component of the proteasome core, a large protease complex with broad specificity involved in protein degradation. The H.volcanii alpha1-beta proteasome is able to cleave oligopeptides after Phe, Tyr and Trp, poorly after Glu but not after Arg. Thus, displays chymotrypsin-like activity, low caspase-like activity but no trypsin-like activity. The chain is Proteasome subunit alpha 1 from Haloferax volcanii (strain ATCC 29605 / DSM 3757 / JCM 8879 / NBRC 14742 / NCIMB 2012 / VKM B-1768 / DS2) (Halobacterium volcanii).